We begin with the raw amino-acid sequence, 114 residues long: TYRO protein tyrosine kinase-binding protein (114 aa).

Positions 1 to 21 (MGALEPSWCLLFLPVLLTVGG) are cleaved as a signal peptide. The Extracellular segment spans residues 22-42 (LSPVQAQSDTFPRCDCSSVSP). Residues 43-63 (GVLAGIVLGDLVLTLLIALAV) traverse the membrane as a helical segment. Aspartate 52 is a binding site for Ca(2+). Over 64 to 114 (YSLGRLVSRGQGTAEGTRKQHIAETESPYQELQGQRPEVYSDLNTQRQYYR) the chain is Cytoplasmic. The interval 74–107 (QGTAEGTRKQHIAETESPYQELQGQRPEVYSDLN) is disordered. An ITAM domain is found at 81-109 (RKQHIAETESPYQELQGQRPEVYSDLNTQ). Tyrosine 92 and tyrosine 103 each carry phosphotyrosine.

It belongs to the TYROBP family. As to quaternary structure, homodimer; disulfide-linked. Homotrimer; disulfide-linked. Homotetramer; disulfide-linked. Homotrimers and homotetramers form when low levels of partner receptors are available and are competitive with assembly with interacting receptors. They may represent alternative oligomerization states or may be intermediates in the receptor assembly process. Binding of a metal cation aids in homooligomerization through coordination of the metal ion by the subunits of the oligomer. Interacts with TREM1. Interacts with TREM2. Interacts with TREM3. Interacts with CLECSF5. Interacts with CD300LB and CD300C2. Interacts with CD300E. Interacts (via ITAM domain) with SYK (via SH2 domains); activates SYK mediating neutrophil and macrophage integrin-mediated activation. Interacts (via transmembrane domain) with KLRK1 isoform 2 (via transmembrane domain); the interaction is required for KLRK1 NK cell surface expression and NK cell-mediated cytotoxicity. Interacts with KLRC2. Interacts with CD300H. Interacts with KLRD1. Interacts with KLRA4 and KLRA8. Tyrosine phosphorylated. Following ligand binding by associated receptors, tyrosine phosphorylated in the ITAM domain which leads to activation of additional tyrosine kinases and subsequent cell activation. As to expression, expressed on microglia (at protein level). Expressed on oligodendrocytes (at protein level). Expressed on macrophages and osteoclasts. Expressed on dendritic cells in liver, spleen, kidney and lung with highest levels in liver dendritic cells.

The protein localises to the cell membrane. Its function is as follows. Adapter protein which non-covalently associates with activating receptors found on the surface of a variety of immune cells to mediate signaling and cell activation following ligand binding by the receptors. TYROBP is tyrosine-phosphorylated in the ITAM domain following ligand binding by the associated receptors which leads to activation of additional tyrosine kinases and subsequent cell activation. Also has an inhibitory role in some cells. Non-covalently associates with activating receptors of the CD300 family to mediate cell activation. Also mediates cell activation through association with activating receptors of the CD200R family. Required for neutrophil activation mediated by integrin. Required for the activation of myeloid cells mediated by the CLEC5A/MDL1 receptor. Associates with natural killer (NK) cell receptors such as the KLRD1/KLRC2 heterodimer to mediate NK cell activation. Also associates non-covalently with the NK cell receptors KLRA4/LY49D and KLRA8/LY49H which leads to NK cell activation. Associates with TREM1 to mediate activation of neutrophils and monocytes. Associates with TREM2 on monocyte-derived dendritic cells to mediate up-regulation of chemokine receptor CCR7 and dendritic cell maturation and survival. Association with TREM2 mediates cytokine-induced formation of multinucleated giant cells which are formed by the fusion of macrophages. Stabilizes the TREM2 C-terminal fragment (TREM2-CTF) which is produced by TREM2 ectodomain shedding. In microglia, required with TREM2 for phagocytosis of apoptotic neurons. Required with ITGAM/CD11B in microglia to control production of microglial superoxide ions which promote the neuronal apoptosis that occurs during brain development. Promotes pro-inflammatory responses in microglia following nerve injury which accelerates degeneration of injured neurons. Positively regulates the expression of the IRAK3/IRAK-M kinase and IL10 production by liver dendritic cells and inhibits their T cell allostimulatory ability. Negatively regulates B cell proliferation. Required for CSF1-mediated osteoclast cytoskeletal organization. Positively regulates multinucleation during osteoclast development. In Mus musculus (Mouse), this protein is TYRO protein tyrosine kinase-binding protein.